A 718-amino-acid polypeptide reads, in one-letter code: Fatty acid oxidation complex subunit alpha (718 aa).

The tract at residues 1–188 (MIYQGESIRV…KVGAVDAVVE (188 aa)) is enoyl-CoA hydratase/isomerase. Asp-295 is a substrate binding site. The 3-hydroxyacyl-CoA dehydrogenase stretch occupies residues 310–718 (TKEIKTAGVL…KSYFDTTSAK (409 aa)). Residues Met-324, Asp-343, 400-402 (VVE), Lys-407, and Ser-429 contribute to the NAD(+) site. His-450 acts as the For 3-hydroxyacyl-CoA dehydrogenase activity in catalysis. Asn-453 contacts NAD(+). The substrate site is built by Asn-500 and Tyr-658.

The protein in the N-terminal section; belongs to the enoyl-CoA hydratase/isomerase family. In the C-terminal section; belongs to the 3-hydroxyacyl-CoA dehydrogenase family. As to quaternary structure, heterotetramer of two alpha chains (FadB) and two beta chains (FadA).

It catalyses the reaction a (3S)-3-hydroxyacyl-CoA + NAD(+) = a 3-oxoacyl-CoA + NADH + H(+). The catalysed reaction is a (3S)-3-hydroxyacyl-CoA = a (2E)-enoyl-CoA + H2O. The enzyme catalyses a 4-saturated-(3S)-3-hydroxyacyl-CoA = a (3E)-enoyl-CoA + H2O. It carries out the reaction (3S)-3-hydroxybutanoyl-CoA = (3R)-3-hydroxybutanoyl-CoA. It catalyses the reaction a (3Z)-enoyl-CoA = a 4-saturated (2E)-enoyl-CoA. The catalysed reaction is a (3E)-enoyl-CoA = a 4-saturated (2E)-enoyl-CoA. Its pathway is lipid metabolism; fatty acid beta-oxidation. In terms of biological role, involved in the aerobic and anaerobic degradation of long-chain fatty acids via beta-oxidation cycle. Catalyzes the formation of 3-oxoacyl-CoA from enoyl-CoA via L-3-hydroxyacyl-CoA. It can also use D-3-hydroxyacyl-CoA and cis-3-enoyl-CoA as substrate. This is Fatty acid oxidation complex subunit alpha from Idiomarina loihiensis (strain ATCC BAA-735 / DSM 15497 / L2-TR).